The primary structure comprises 240 residues: Ribonuclease HII (240 aa).

Positions 31-222 (RLIAGVDEAG…VRRALGLETA (192 aa)) constitute an RNase H type-2 domain. A divalent metal cation-binding residues include D37, E38, and D130.

The protein belongs to the RNase HII family. Mn(2+) is required as a cofactor. It depends on Mg(2+) as a cofactor.

It localises to the cytoplasm. The catalysed reaction is Endonucleolytic cleavage to 5'-phosphomonoester.. In terms of biological role, endonuclease that specifically degrades the RNA of RNA-DNA hybrids. The protein is Ribonuclease HII of Xanthomonas campestris pv. campestris (strain 8004).